The following is a 199-amino-acid chain: NADH-ubiquinone oxidoreductase chain 6 (199 aa).

5 consecutive transmembrane segments (helical) span residues 1–21 (MILF…VIRA), 27–47 (SVLF…LLGL), 49–69 (FFAM…FLFV), 87–107 (YLPV…LMVD), and 150–170 (FFLF…AIVL).

This sequence belongs to the complex I subunit 6 family.

Its subcellular location is the mitochondrion membrane. It catalyses the reaction a ubiquinone + NADH + 5 H(+)(in) = a ubiquinol + NAD(+) + 4 H(+)(out). Its function is as follows. Core subunit of the mitochondrial membrane respiratory chain NADH dehydrogenase (Complex I) that is believed to belong to the minimal assembly required for catalysis. Complex I functions in the transfer of electrons from NADH to the respiratory chain. The immediate electron acceptor for the enzyme is believed to be ubiquinone. The polypeptide is NADH-ubiquinone oxidoreductase chain 6 (ND6) (Marchantia polymorpha (Common liverwort)).